The primary structure comprises 452 residues: Glycine receptor subunit alpha-2 (452 aa).

A signal peptide spans 1-27; that stretch reads MNRQLVNILTALFAFFLETNHFRTAFC. The Extracellular segment spans residues 28–256; that stretch reads KDHDSRSGKQ…KFHLERQMGY (229 aa). N-linked (GlcNAc...) asparagine glycosylation occurs at asparagine 72. A glycine-binding site is contributed by arginine 99. Arginine 99 serves as a coordination point for strychnine. An N-linked (GlcNAc...) asparagine glycan is attached at asparagine 103. Residue serine 163 participates in glycine binding. Cysteine 172 and cysteine 186 are disulfide-bonded. Zn(2+)-binding residues include glutamate 226 and glutamate 228. Cysteine 232 and cysteine 243 are joined by a disulfide. A glycine-binding site is contributed by threonine 238. Histidine 249 lines the Zn(2+) pocket. Residues 257-278 traverse the membrane as a helical segment; that stretch reads YLIQMYIPSLLIVILSWVSFWI. At 279–283 the chain is on the cytoplasmic side; sequence NMDAA. A helical membrane pass occupies residues 284–304; it reads PARVALGITTVLTMTTQSSGS. Over 305–315 the chain is Extracellular; that stretch reads RASLPKVSYVK. Residues 316 to 336 form a helical membrane-spanning segment; it reads AIDIWMAVCLLFVFAALLEYA. At 337 to 420 the chain is on the cytoplasmic side; sequence AVNFVSRQHK…FVDRAKRIDT (84 aa). The helical transmembrane segment at 421–441 threads the bilayer; the sequence is ISRAAFPLAFLIFNIFYWITY. The Extracellular segment spans residues 442–452; it reads KIIRHEDVHKK.

Belongs to the ligand-gated ion channel (TC 1.A.9) family. Glycine receptor (TC 1.A.9.3) subfamily. GLRA2 sub-subfamily. As to quaternary structure, interacts with GLRB. Heteropentamer composed of GLRA2 and GLRB. Functional GLRB-GLRA2 heteropentamers contain four GLRA2 subunits and one GLRB subunit, although alternative subunit composition cannot be excluded. Homopentamer (in vitro). Both homopentamers and heteropentamers form functional ion channels, but their characteristics are subtly different.

It localises to the postsynaptic cell membrane. It is found in the synapse. The protein resides in the cell membrane. The protein localises to the cell projection. It carries out the reaction chloride(in) = chloride(out). Channel opening is triggered by extracellular glycine. Channel opening is also triggered by taurine and beta-alanine. Inhibited by strychnine. Inhibited by picrotoxin. Channel activity is potentiated by 10-100 uM Zn(2+). Channel activity is marginally increased by 50 mM ethanol; it is strongly increased by a combination of 0.5 uM Zn(2+) and 50 mM ethanol. Channel activity is inhibited by 100-1000 uM Zn(2+). In terms of biological role, subunit of heteromeric glycine-gated chloride channels. Plays a role in synaptic plasticity. Contributes to the generation of inhibitory postsynaptic currents, and is involved in the down-regulation of neuronal excitability. Plays a role in cellular responses to ethanol. The sequence is that of Glycine receptor subunit alpha-2 from Homo sapiens (Human).